The chain runs to 470 residues: Uronate isomerase (470 aa).

Belongs to the metallo-dependent hydrolases superfamily. Uronate isomerase family.

It carries out the reaction D-glucuronate = D-fructuronate. The enzyme catalyses aldehydo-D-galacturonate = keto-D-tagaturonate. The protein operates within carbohydrate metabolism; pentose and glucuronate interconversion. The chain is Uronate isomerase from Vibrio vulnificus (strain CMCP6).